The chain runs to 282 residues: Kanosamine-6-phosphate phosphatase (282 aa).

Asp-25 serves as the catalytic Nucleophile. Positions 25 and 27 each coordinate Mg(2+). Position 209 (Lys-209) interacts with phosphate. Mg(2+) is bound by residues Asp-232 and Ser-233. Asn-235 provides a ligand contact to phosphate.

The protein belongs to the HAD-like hydrolase superfamily. Cof family. In terms of assembly, homotetramer. Mg(2+) is required as a cofactor.

It carries out the reaction D-kanosamine 6-phosphate + H2O = kanosamine + phosphate. Its pathway is antibiotic biosynthesis; kanosamine biosynthesis. In terms of biological role, involved in the biosynthesis of kanosamine (3-amino-3-deoxy-D-glucose), which is known to have antibiotic and antifungal properties, and to be a precursor of the antibiotic neotrehalosadiamine (3,3'-diamino-3,3'-dideoxy-alpha,beta-trehalose (NTD)). Catalyzes the dephosphorylation of kanosamine 6-phosphate to yield kanosamine. There is a trace amount of activity using glucosamine-6-phosphate. This is Kanosamine-6-phosphate phosphatase (ntdB) from Bacillus subtilis (strain 168).